Reading from the N-terminus, the 229-residue chain is uncharacterized protein (229 aa).

An S4 RNA-binding domain is found at 2-69; that stretch reads QRLAKLISNA…KSRLWIYYKP (68 aa). The Nucleophile role is filled by aspartate 102.

It belongs to the pseudouridine synthase RsuA family.

It carries out the reaction a uridine in RNA = a pseudouridine in RNA. This is an uncharacterized protein from Rickettsia bellii (strain RML369-C).